A 634-amino-acid chain; its full sequence is Pescadillo homolog (634 aa).

Residues 321–414 (RLRTLFKGLK…QLLPTNKYFM (94 aa)) form the BRCT domain. Disordered regions lie at residues 437 to 473 (EEKALHDPSLIETHVQSDDDDDDSDAEADNQEEEEIE), 491 to 561 (EYKK…RKAE), and 603 to 634 (NIDADAKEAKKTAKREAKKAAAEAAAKALKMA). Residue Ser453 is modified to Phosphoserine. Composition is skewed to acidic residues over residues 454–473 (DDDDDDSDAEADNQEEEEIE) and 501–527 (VNEDEEDSVDDDDEEDEEEEEEEDVEQ). 2 coiled-coil regions span residues 460-546 (SDAE…KVES) and 596-629 (LLRKKRRNIDADAKEAKKTAKREAKKAAAEAAAK). 2 stretches are compositionally biased toward basic and acidic residues: residues 528 to 548 (LDDKTKRLLEEKQKMKVESGK) and 603 to 623 (NIDADAKEAKKTAKREAKKAA). Low complexity predominate over residues 624–634 (AEAAAKALKMA).

The protein belongs to the pescadillo family.

Its subcellular location is the nucleus. The protein localises to the nucleolus. It is found in the nucleoplasm. Required for maturation of ribosomal RNAs and formation of the large ribosomal subunit. The polypeptide is Pescadillo homolog (Drosophila willistoni (Fruit fly)).